The sequence spans 401 residues: Imidazolonepropionase (401 aa).

Fe(3+) is bound by residues His70 and His72. The Zn(2+) site is built by His70 and His72. Residues Arg79, Tyr142, and His175 each contribute to the 4-imidazolone-5-propanoate site. Residue Tyr142 participates in N-formimidoyl-L-glutamate binding. Residue His238 participates in Fe(3+) binding. Zn(2+) is bound at residue His238. A 4-imidazolone-5-propanoate-binding site is contributed by Gln241. Asp313 lines the Fe(3+) pocket. Asp313 is a binding site for Zn(2+). The N-formimidoyl-L-glutamate site is built by Asn315 and Gly317. Position 318 (Thr318) interacts with 4-imidazolone-5-propanoate.

The protein belongs to the metallo-dependent hydrolases superfamily. HutI family. Requires Zn(2+) as cofactor. Fe(3+) is required as a cofactor.

Its subcellular location is the cytoplasm. The catalysed reaction is 4-imidazolone-5-propanoate + H2O = N-formimidoyl-L-glutamate. It functions in the pathway amino-acid degradation; L-histidine degradation into L-glutamate; N-formimidoyl-L-glutamate from L-histidine: step 3/3. Functionally, catalyzes the hydrolytic cleavage of the carbon-nitrogen bond in imidazolone-5-propanoate to yield N-formimidoyl-L-glutamate. It is the third step in the universal histidine degradation pathway. The sequence is that of Imidazolonepropionase from Acidiphilium cryptum (strain JF-5).